The following is a 412-amino-acid chain: Putative competence-damage inducible protein (412 aa).

The protein belongs to the CinA family.

This chain is Putative competence-damage inducible protein, found in Bacillus cereus (strain G9842).